The following is a 163-amino-acid chain: Single-stranded DNA-binding protein 2 (163 aa).

An SSB domain is found at 1–104 (MINNVVLVGR…VVADNFQMLE (104 aa)). The interval 109–163 (REGGSTGSFNGGFNNNTSSSNSYSAPAQQTPNFGRDDSPFGNSNPMDISDDDLPF) is disordered. Low complexity predominate over residues 119-130 (GGFNNNTSSSNS). Residues 131–140 (YSAPAQQTPN) show a composition bias toward polar residues. Residues 158-163 (DDDLPF) carry the Important for interaction with partner proteins motif.

As to quaternary structure, homotetramer.

Its function is as follows. Plays an important role in DNA replication, recombination and repair. Binds to ssDNA and to an array of partner proteins to recruit them to their sites of action during DNA metabolism. This is Single-stranded DNA-binding protein 2 (ssb2) from Streptococcus pyogenes serotype M18 (strain MGAS8232).